Reading from the N-terminus, the 484-residue chain is Glutamyl-tRNA(Gln) amidotransferase subunit A (484 aa).

Residues Lys77 and Ser152 each act as charge relay system in the active site. Residue Ser176 is the Acyl-ester intermediate of the active site.

The protein belongs to the amidase family. GatA subfamily. As to quaternary structure, heterotrimer of A, B and C subunits.

It catalyses the reaction L-glutamyl-tRNA(Gln) + L-glutamine + ATP + H2O = L-glutaminyl-tRNA(Gln) + L-glutamate + ADP + phosphate + H(+). Functionally, allows the formation of correctly charged Gln-tRNA(Gln) through the transamidation of misacylated Glu-tRNA(Gln) in organisms which lack glutaminyl-tRNA synthetase. The reaction takes place in the presence of glutamine and ATP through an activated gamma-phospho-Glu-tRNA(Gln). The chain is Glutamyl-tRNA(Gln) amidotransferase subunit A from Pseudomonas aeruginosa (strain LESB58).